Reading from the N-terminus, the 185-residue chain is MANAIIETAKERFAQSHQSLSREYASIRAGRANASLLDRIQVDYYGAPTPLNQLASITVPEARVLLISPFDKSSIKDIERALNASDLGITPANDGSVIRLVIPALTEETRKELAKEVKKVGENAKIAIRNIRRDAMDDAKKQEKAKEITEDELKTLEKDIQKATDDAIKEIDRMTAEKEKELLSG.

The protein belongs to the RRF family.

It is found in the cytoplasm. Functionally, responsible for the release of ribosomes from messenger RNA at the termination of protein biosynthesis. May increase the efficiency of translation by recycling ribosomes from one round of translation to another. The sequence is that of Ribosome-recycling factor from Streptococcus pyogenes serotype M18 (strain MGAS8232).